A 195-amino-acid chain; its full sequence is Peptidyl-tRNA hydrolase (195 aa).

Tyr-18 is a binding site for tRNA. The active-site Proton acceptor is His-23. TRNA contacts are provided by Phe-69, Asn-71, and Asn-117.

Belongs to the PTH family. In terms of assembly, monomer.

It localises to the cytoplasm. The catalysed reaction is an N-acyl-L-alpha-aminoacyl-tRNA + H2O = an N-acyl-L-amino acid + a tRNA + H(+). In terms of biological role, hydrolyzes ribosome-free peptidyl-tRNAs (with 1 or more amino acids incorporated), which drop off the ribosome during protein synthesis, or as a result of ribosome stalling. Catalyzes the release of premature peptidyl moieties from peptidyl-tRNA molecules trapped in stalled 50S ribosomal subunits, and thus maintains levels of free tRNAs and 50S ribosomes. This is Peptidyl-tRNA hydrolase from Alcanivorax borkumensis (strain ATCC 700651 / DSM 11573 / NCIMB 13689 / SK2).